The primary structure comprises 948 residues: Translation initiation factor IF-2 (948 aa).

Disordered regions lie at residues 61-120 (IQAN…PALI), 162-243 (KSRE…TQSA), and 255-285 (QEKD…SHKI). The span at 68–78 (KNPEQDNKDDL) shows a compositional bias: basic and acidic residues. Positions 173–189 (SNTNNANSTNNANNVNN) are enriched in low complexity. Residues 190-207 (AKKEISEVKKQEQEIKRH) are compositionally biased toward basic and acidic residues. A compositionally biased stretch (basic residues) spans 208–219 (ENIKRRTGFRVI). Over residues 230–243 (ENSVAESKKPTQSA) the composition is skewed to polar residues. Positions 447–616 (ERPPVVTIMG…LIQADIMELK (170 aa)) constitute a tr-type G domain. A G1 region spans residues 456 to 463 (GHVDHGKT). Position 456–463 (456–463 (GHVDHGKT)) interacts with GTP. A G2 region spans residues 481-485 (GITQH). Residues 502 to 505 (DTPG) are G3. Residues 502–506 (DTPGH) and 556–559 (NKMD) contribute to the GTP site. A G4 region spans residues 556-559 (NKMD). Residues 592-594 (SAK) form a G5 region.

Belongs to the TRAFAC class translation factor GTPase superfamily. Classic translation factor GTPase family. IF-2 subfamily.

It localises to the cytoplasm. Its function is as follows. One of the essential components for the initiation of protein synthesis. Protects formylmethionyl-tRNA from spontaneous hydrolysis and promotes its binding to the 30S ribosomal subunits. Also involved in the hydrolysis of GTP during the formation of the 70S ribosomal complex. This is Translation initiation factor IF-2 from Helicobacter pylori (strain Shi470).